A 253-amino-acid polypeptide reads, in one-letter code: MPSDNQKNTNDLPLAGPRHVAIIMDGNGRWAKSRGKMRIFGHQAGVKAVRRSVSFAVNHGLDALTLYAFSSENWNRPAQEVSALMELFVRALDSEVKSLHKHNVRLRVIGDIGRFSPRLQERIRRSEVLTEKNQGLTLNIAANYGGRWDIIQGVRQLAEQVQEGILRPDSINEASLCQYICLNDLAPVDLVIRTGGEHRISNFLLWQIAYAELYFTDVLWPDFDEQVFEGALNAFAQRERRFGGTTPIDADAS.

The active site involves Asp-25. Asp-25 is a Mg(2+) binding site. Substrate-binding positions include 26–29 (GNGR), Trp-30, Arg-38, His-42, and 70–72 (SSE). Catalysis depends on Asn-73, which acts as the Proton acceptor. The substrate site is built by Trp-74, Arg-76, and Arg-193. His-198 contacts Mg(2+). 199-201 (RIS) lines the substrate pocket. Glu-212 lines the Mg(2+) pocket.

It belongs to the UPP synthase family. In terms of assembly, homodimer. It depends on Mg(2+) as a cofactor.

It catalyses the reaction 8 isopentenyl diphosphate + (2E,6E)-farnesyl diphosphate = di-trans,octa-cis-undecaprenyl diphosphate + 8 diphosphate. Catalyzes the sequential condensation of isopentenyl diphosphate (IPP) with (2E,6E)-farnesyl diphosphate (E,E-FPP) to yield (2Z,6Z,10Z,14Z,18Z,22Z,26Z,30Z,34E,38E)-undecaprenyl diphosphate (di-trans,octa-cis-UPP). UPP is the precursor of glycosyl carrier lipid in the biosynthesis of bacterial cell wall polysaccharide components such as peptidoglycan and lipopolysaccharide. The protein is Ditrans,polycis-undecaprenyl-diphosphate synthase ((2E,6E)-farnesyl-diphosphate specific) of Pectobacterium atrosepticum (strain SCRI 1043 / ATCC BAA-672) (Erwinia carotovora subsp. atroseptica).